The chain runs to 520 residues: uncharacterized protein (520 aa).

A run of 9 helical transmembrane segments spans residues 38–58 (VVLI…IPGG), 84–104 (IAIY…GIFN), 105–125 (IGIS…ILKV), 138–158 (IITV…VATL), 167–187 (VVSA…LVET), 220–240 (FGWL…AVVL), 271–291 (FLSF…VYTA), 318–338 (IAIG…SVLI), and 355–375 (ASLV…MVYF).

The protein localises to the cell membrane. This is an uncharacterized protein from Mycoplasma genitalium (strain ATCC 33530 / DSM 19775 / NCTC 10195 / G37) (Mycoplasmoides genitalium).